Reading from the N-terminus, the 389-residue chain is Chalcone synthase 1A (389 aa).

Residue C164 is part of the active site.

Belongs to the thiolase-like superfamily. Chalcone/stilbene synthases family.

The catalysed reaction is (E)-4-coumaroyl-CoA + 3 malonyl-CoA + 3 H(+) = 2',4,4',6'-tetrahydroxychalcone + 3 CO2 + 4 CoA. It participates in secondary metabolite biosynthesis; flavonoid biosynthesis. Functionally, the primary product of this enzyme is 4,2',4',6'-tetrahydroxychalcone (also termed naringenin-chalcone or chalcone) which can under specific conditions spontaneously isomerize into naringenin. The sequence is that of Chalcone synthase 1A (CHS1A) from Solanum tuberosum (Potato).